The primary structure comprises 149 residues: Ribonuclease pancreatic (149 aa).

A signal peptide spans 1 to 25; it reads MGLEKSLMLFPLFVLLLGWVQPSLG. The tract at residues 30 to 49 is disordered; it reads AQKFQRQHMDPAGSSSNSPT. Residues lysine 32 and arginine 35 each coordinate substrate. Histidine 37 (proton acceptor) is an active-site residue. Disulfide bonds link cysteine 51–cysteine 109, cysteine 65–cysteine 120, cysteine 83–cysteine 135, and cysteine 90–cysteine 97. Position 66 to 70 (66 to 70) interacts with substrate; that stretch reads KPVNT. N-linked (GlcNAc...) asparagine glycosylation occurs at asparagine 87. Lysine 91 contacts substrate. The active-site Proton donor is histidine 144.

Belongs to the pancreatic ribonuclease family. As to quaternary structure, monomer. Interacts with and forms tight 1:1 complexes with RNH1. Dimerization of two such complexes may occur. Interaction with RNH1 inhibits this protein. Pancreas.

It localises to the secreted. The catalysed reaction is an [RNA] containing cytidine + H2O = an [RNA]-3'-cytidine-3'-phosphate + a 5'-hydroxy-ribonucleotide-3'-[RNA].. It catalyses the reaction an [RNA] containing uridine + H2O = an [RNA]-3'-uridine-3'-phosphate + a 5'-hydroxy-ribonucleotide-3'-[RNA].. In terms of biological role, endonuclease that catalyzes the cleavage of RNA on the 3' side of pyrimidine nucleotides. Acts on single-stranded and double-stranded RNA. The chain is Ribonuclease pancreatic (Rnase1) from Mus saxicola (Brown spiny mouse).